An 847-amino-acid chain; its full sequence is DNA mismatch repair protein MutS (847 aa).

602 to 609 contributes to the ATP binding site; it reads GPNMSGKS. The disordered stretch occupies residues 788–807; it reads EKREASLPASRTDSQKVSEQ. The span at 796 to 807 shows a compositional bias: polar residues; that stretch reads ASRTDSQKVSEQ.

Belongs to the DNA mismatch repair MutS family.

In terms of biological role, this protein is involved in the repair of mismatches in DNA. It is possible that it carries out the mismatch recognition step. This protein has a weak ATPase activity. This Streptococcus gordonii (strain Challis / ATCC 35105 / BCRC 15272 / CH1 / DL1 / V288) protein is DNA mismatch repair protein MutS.